The following is a 56-amino-acid chain: Large ribosomal subunit protein bL32 (56 aa).

The interval 1-37 (MAVQQNKKSRSKRGMRRSHDALSTAQLSVDATSGELH) is disordered. Positions 7-16 (KKSRSKRGMR) are enriched in basic residues. A compositionally biased stretch (polar residues) spans 21 to 31 (ALSTAQLSVDA).

Belongs to the bacterial ribosomal protein bL32 family.

This chain is Large ribosomal subunit protein bL32, found in Shewanella pealeana (strain ATCC 700345 / ANG-SQ1).